The following is a 66-amino-acid chain: Small ribosomal subunit protein eS27 (66 aa).

4 residues coordinate Zn(2+): Cys-21, Cys-24, Cys-40, and Cys-43. The C4-type zinc-finger motif lies at 21-43; sequence CRQCNNEQVIFSNATFPVRCLSC.

It belongs to the eukaryotic ribosomal protein eS27 family. Part of the 30S ribosomal subunit. Zn(2+) is required as a cofactor.

The sequence is that of Small ribosomal subunit protein eS27 from Sulfolobus acidocaldarius (strain ATCC 33909 / DSM 639 / JCM 8929 / NBRC 15157 / NCIMB 11770).